Reading from the N-terminus, the 454-residue chain is Bifunctional protein GlmU (454 aa).

The pyrophosphorylase stretch occupies residues methionine 1 to arginine 226. UDP-N-acetyl-alpha-D-glucosamine is bound by residues leucine 8–glycine 11, lysine 22, glutamine 73, glycine 78–threonine 79, tyrosine 99–aspartate 101, glycine 136, glutamate 151, asparagine 166, and asparagine 224. Aspartate 101 is a binding site for Mg(2+). Mg(2+) is bound at residue asparagine 224. Positions methionine 227–glutamine 247 are linker. Residues glycine 248–lysine 454 are N-acetyltransferase. Residues arginine 330 and lysine 348 each contribute to the UDP-N-acetyl-alpha-D-glucosamine site. Histidine 360 functions as the Proton acceptor in the catalytic mechanism. 2 residues coordinate UDP-N-acetyl-alpha-D-glucosamine: tyrosine 363 and asparagine 374. Residues alanine 377, asparagine 383–tyrosine 384, serine 402, alanine 420, and arginine 437 contribute to the acetyl-CoA site.

In the N-terminal section; belongs to the N-acetylglucosamine-1-phosphate uridyltransferase family. This sequence in the C-terminal section; belongs to the transferase hexapeptide repeat family. Homotrimer. Mg(2+) is required as a cofactor.

The protein resides in the cytoplasm. The catalysed reaction is alpha-D-glucosamine 1-phosphate + acetyl-CoA = N-acetyl-alpha-D-glucosamine 1-phosphate + CoA + H(+). It carries out the reaction N-acetyl-alpha-D-glucosamine 1-phosphate + UTP + H(+) = UDP-N-acetyl-alpha-D-glucosamine + diphosphate. It participates in nucleotide-sugar biosynthesis; UDP-N-acetyl-alpha-D-glucosamine biosynthesis; N-acetyl-alpha-D-glucosamine 1-phosphate from alpha-D-glucosamine 6-phosphate (route II): step 2/2. It functions in the pathway nucleotide-sugar biosynthesis; UDP-N-acetyl-alpha-D-glucosamine biosynthesis; UDP-N-acetyl-alpha-D-glucosamine from N-acetyl-alpha-D-glucosamine 1-phosphate: step 1/1. The protein operates within bacterial outer membrane biogenesis; LPS lipid A biosynthesis. In terms of biological role, catalyzes the last two sequential reactions in the de novo biosynthetic pathway for UDP-N-acetylglucosamine (UDP-GlcNAc). The C-terminal domain catalyzes the transfer of acetyl group from acetyl coenzyme A to glucosamine-1-phosphate (GlcN-1-P) to produce N-acetylglucosamine-1-phosphate (GlcNAc-1-P), which is converted into UDP-GlcNAc by the transfer of uridine 5-monophosphate (from uridine 5-triphosphate), a reaction catalyzed by the N-terminal domain. This chain is Bifunctional protein GlmU, found in Pseudomonas aeruginosa (strain ATCC 15692 / DSM 22644 / CIP 104116 / JCM 14847 / LMG 12228 / 1C / PRS 101 / PAO1).